Reading from the N-terminus, the 262-residue chain is Hydroxyethylthiazole kinase (262 aa).

Methionine 50 is a binding site for substrate. ATP is bound by residues arginine 125 and threonine 171. Position 198 (glycine 198) interacts with substrate.

Belongs to the Thz kinase family. Requires Mg(2+) as cofactor.

The catalysed reaction is 5-(2-hydroxyethyl)-4-methylthiazole + ATP = 4-methyl-5-(2-phosphooxyethyl)-thiazole + ADP + H(+). It participates in cofactor biosynthesis; thiamine diphosphate biosynthesis; 4-methyl-5-(2-phosphoethyl)-thiazole from 5-(2-hydroxyethyl)-4-methylthiazole: step 1/1. Its function is as follows. Catalyzes the phosphorylation of the hydroxyl group of 4-methyl-5-beta-hydroxyethylthiazole (THZ). In Escherichia coli O157:H7, this protein is Hydroxyethylthiazole kinase.